The following is a 285-amino-acid chain: 2-dehydro-3-deoxyphosphooctonate aldolase (285 aa).

It belongs to the KdsA family.

Its subcellular location is the cytoplasm. The enzyme catalyses D-arabinose 5-phosphate + phosphoenolpyruvate + H2O = 3-deoxy-alpha-D-manno-2-octulosonate-8-phosphate + phosphate. It functions in the pathway carbohydrate biosynthesis; 3-deoxy-D-manno-octulosonate biosynthesis; 3-deoxy-D-manno-octulosonate from D-ribulose 5-phosphate: step 2/3. The protein operates within bacterial outer membrane biogenesis; lipopolysaccharide biosynthesis. The protein is 2-dehydro-3-deoxyphosphooctonate aldolase of Leptothrix cholodnii (strain ATCC 51168 / LMG 8142 / SP-6) (Leptothrix discophora (strain SP-6)).